We begin with the raw amino-acid sequence, 373 residues long: MQHESPIIRRKSTRIYVGDVPIGDGAPIAVQSMTNTRTTDVAATVAQIRALEKVGADIVRVSVPTMDAAEAFKLIKQQVSVPLVADIHFDYRIALKVAEYGVDCLRINPGNIGNESRIRSVVDCARDMNIPIRIGVNGGSLEKEIQEKYTEPTAEALVESAMRHVDILDRLNFDQFKVSVKASDVFLAVGSYRLLAKQIDQPLHLGITEAGGARAGSVKSAVGLGMLLSEGIGDTLRISLAADPVEEIKVGFDILKSLRIRSRGINFIACPSCSRQEFDVINTVNALEERLEDVITPMDVSIIGCVVNGPGEAEVSHLGLAGSARKSAFYEDGKRQKERFDNDDLVDKLEAKIRAKASVLDKANRIDVENLED.

4 residues coordinate [4Fe-4S] cluster: Cys270, Cys273, Cys305, and Glu312.

This sequence belongs to the IspG family. [4Fe-4S] cluster serves as cofactor.

The catalysed reaction is (2E)-4-hydroxy-3-methylbut-2-enyl diphosphate + oxidized [flavodoxin] + H2O + 2 H(+) = 2-C-methyl-D-erythritol 2,4-cyclic diphosphate + reduced [flavodoxin]. Its pathway is isoprenoid biosynthesis; isopentenyl diphosphate biosynthesis via DXP pathway; isopentenyl diphosphate from 1-deoxy-D-xylulose 5-phosphate: step 5/6. In terms of biological role, converts 2C-methyl-D-erythritol 2,4-cyclodiphosphate (ME-2,4cPP) into 1-hydroxy-2-methyl-2-(E)-butenyl 4-diphosphate. This Vibrio atlanticus (strain LGP32) (Vibrio splendidus (strain Mel32)) protein is 4-hydroxy-3-methylbut-2-en-1-yl diphosphate synthase (flavodoxin).